The primary structure comprises 491 residues: Chromosomal replication initiator protein DnaA (491 aa).

Positions 1 to 68 (MTSIWGQIQH…RTAACGVIGD (68 aa)) are domain I, interacts with DnaA modulators. The domain II stretch occupies residues 68–146 (DTVEVVVTAG…PLDWAPVPQS (79 aa)). Residues 147-364 (RTNWRFSFDD…SCLHNLILKA (218 aa)) form a domain III, AAA+ region region. The ATP site is built by G190, G192, K193, and T194. The interval 365 to 491 (KLLNRQISLE…RNGRITHARH (127 aa)) is domain IV, binds dsDNA.

This sequence belongs to the DnaA family. As to quaternary structure, oligomerizes as a right-handed, spiral filament on DNA at oriC.

The protein localises to the cytoplasm. Plays an essential role in the initiation and regulation of chromosomal replication. ATP-DnaA binds to the origin of replication (oriC) to initiate formation of the DNA replication initiation complex once per cell cycle. Binds the DnaA box (a 9 base pair repeat at the origin) and separates the double-stranded (ds)DNA. Forms a right-handed helical filament on oriC DNA; dsDNA binds to the exterior of the filament while single-stranded (ss)DNA is stabiized in the filament's interior. The ATP-DnaA-oriC complex binds and stabilizes one strand of the AT-rich DNA unwinding element (DUE), permitting loading of DNA polymerase. After initiation quickly degrades to an ADP-DnaA complex that is not apt for DNA replication. Binds acidic phospholipids. The protein is Chromosomal replication initiator protein DnaA of Nitratidesulfovibrio vulgaris (strain ATCC 29579 / DSM 644 / CCUG 34227 / NCIMB 8303 / VKM B-1760 / Hildenborough) (Desulfovibrio vulgaris).